Reading from the N-terminus, the 525-residue chain is Probable malate:quinone oxidoreductase (525 aa).

It belongs to the MQO family. It depends on FAD as a cofactor.

The enzyme catalyses (S)-malate + a quinone = a quinol + oxaloacetate. It functions in the pathway carbohydrate metabolism; tricarboxylic acid cycle; oxaloacetate from (S)-malate (quinone route): step 1/1. In Serratia proteamaculans (strain 568), this protein is Probable malate:quinone oxidoreductase.